Consider the following 103-residue polypeptide: Omega toxin Ap5 (103 aa).

The first 22 residues, 1-22 (MNTIQVILFAVVLVLTVTVGQA), serve as a signal peptide directing secretion. Residues 23–57 (DEDSAETSLLRKLEEAEASMFGQYLEESKNSREKR) constitute a propeptide that is removed on maturation. 3 disulfide bridges follow: cysteine 58-cysteine 73, cysteine 65-cysteine 78, and cysteine 72-cysteine 93.

Belongs to the neurotoxin 14 (magi-1) family. 08 (Ltx-4) subfamily. Expressed by the venom duct.

It is found in the secreted. Functionally, shows a weak inhibition on the voltage-gated calcium channel Cav2.1/CACNA1A and some voltage-gated sodium channels (with 1 uM toxin tested: 22.08% inhibition on Cav2.1/CACNA1A, 6.6% on Nav1.1/SCN1A, 4.2% on Nav1.5, and 16% on Nav1.7). Shows a weak inhibition on the voltage-gated calcium channel Cav2.1/CACNA1A (28.06% at 1 uM). The protein is Omega toxin Ap5 of Acanthoscurria paulensis (Brazilian giant black tarantula spider).